The following is a 246-amino-acid chain: 1-(5-phosphoribosyl)-5-[(5-phosphoribosylamino)methylideneamino] imidazole-4-carboxamide isomerase (246 aa).

The active-site Proton acceptor is Asp12. Asp134 serves as the catalytic Proton donor.

The protein belongs to the HisA/HisF family.

The protein resides in the cytoplasm. It carries out the reaction 1-(5-phospho-beta-D-ribosyl)-5-[(5-phospho-beta-D-ribosylamino)methylideneamino]imidazole-4-carboxamide = 5-[(5-phospho-1-deoxy-D-ribulos-1-ylimino)methylamino]-1-(5-phospho-beta-D-ribosyl)imidazole-4-carboxamide. It functions in the pathway amino-acid biosynthesis; L-histidine biosynthesis; L-histidine from 5-phospho-alpha-D-ribose 1-diphosphate: step 4/9. This chain is 1-(5-phosphoribosyl)-5-[(5-phosphoribosylamino)methylideneamino] imidazole-4-carboxamide isomerase, found in Psychrobacter cryohalolentis (strain ATCC BAA-1226 / DSM 17306 / VKM B-2378 / K5).